A 265-amino-acid chain; its full sequence is GTP cyclohydrolase FolE2 (265 aa).

This sequence belongs to the GTP cyclohydrolase IV family.

The catalysed reaction is GTP + H2O = 7,8-dihydroneopterin 3'-triphosphate + formate + H(+). It functions in the pathway cofactor biosynthesis; 7,8-dihydroneopterin triphosphate biosynthesis; 7,8-dihydroneopterin triphosphate from GTP: step 1/1. Its function is as follows. Converts GTP to 7,8-dihydroneopterin triphosphate. In Magnetococcus marinus (strain ATCC BAA-1437 / JCM 17883 / MC-1), this protein is GTP cyclohydrolase FolE2.